The primary structure comprises 260 residues: Pyridoxine 5'-phosphate synthase (260 aa).

A 3-amino-2-oxopropyl phosphate-binding site is contributed by asparagine 15. Aspartate 17–histidine 18 contacts 1-deoxy-D-xylulose 5-phosphate. Arginine 26 serves as a coordination point for 3-amino-2-oxopropyl phosphate. Histidine 51 (proton acceptor) is an active-site residue. Residues arginine 53 and histidine 58 each coordinate 1-deoxy-D-xylulose 5-phosphate. The active-site Proton acceptor is glutamate 78. Threonine 108 is a 1-deoxy-D-xylulose 5-phosphate binding site. Residue histidine 199 is the Proton donor of the active site. 3-amino-2-oxopropyl phosphate contacts are provided by residues glycine 200 and glycine 221 to histidine 222.

It belongs to the PNP synthase family. In terms of assembly, homooctamer; tetramer of dimers.

Its subcellular location is the cytoplasm. It catalyses the reaction 3-amino-2-oxopropyl phosphate + 1-deoxy-D-xylulose 5-phosphate = pyridoxine 5'-phosphate + phosphate + 2 H2O + H(+). It participates in cofactor biosynthesis; pyridoxine 5'-phosphate biosynthesis; pyridoxine 5'-phosphate from D-erythrose 4-phosphate: step 5/5. In terms of biological role, catalyzes the complicated ring closure reaction between the two acyclic compounds 1-deoxy-D-xylulose-5-phosphate (DXP) and 3-amino-2-oxopropyl phosphate (1-amino-acetone-3-phosphate or AAP) to form pyridoxine 5'-phosphate (PNP) and inorganic phosphate. In Cupriavidus metallidurans (strain ATCC 43123 / DSM 2839 / NBRC 102507 / CH34) (Ralstonia metallidurans), this protein is Pyridoxine 5'-phosphate synthase.